A 130-amino-acid polypeptide reads, in one-letter code: DNA-directed RNA polymerase subunit omega (130 aa).

The interval 107–130 is disordered; sequence SLDVSQESHDDEIDDQDSGEEVPI. Acidic residues predominate over residues 115 to 130; it reads HDDEIDDQDSGEEVPI.

The protein belongs to the RNA polymerase subunit omega family. In terms of assembly, the RNAP catalytic core consists of 2 alpha, 1 beta, 1 beta' and 1 omega subunit. When a sigma factor is associated with the core the holoenzyme is formed, which can initiate transcription.

It catalyses the reaction RNA(n) + a ribonucleoside 5'-triphosphate = RNA(n+1) + diphosphate. Functionally, promotes RNA polymerase assembly. Latches the N- and C-terminal regions of the beta' subunit thereby facilitating its interaction with the beta and alpha subunits. The polypeptide is DNA-directed RNA polymerase subunit omega (Wolbachia pipientis subsp. Culex pipiens (strain wPip)).